We begin with the raw amino-acid sequence, 288 residues long: 33 kDa chaperonin (288 aa).

Disulfide bonds link Cys233–Cys235 and Cys267–Cys270.

The protein belongs to the HSP33 family. In terms of processing, under oxidizing conditions two disulfide bonds are formed involving the reactive cysteines. Under reducing conditions zinc is bound to the reactive cysteines and the protein is inactive.

Its subcellular location is the cytoplasm. Redox regulated molecular chaperone. Protects both thermally unfolding and oxidatively damaged proteins from irreversible aggregation. Plays an important role in the bacterial defense system toward oxidative stress. This chain is 33 kDa chaperonin, found in Actinobacillus succinogenes (strain ATCC 55618 / DSM 22257 / CCUG 43843 / 130Z).